The sequence spans 507 residues: Dolichyl pyrophosphate Man9GlcNAc2 alpha-1,3-glucosyltransferase (507 aa).

The Cytoplasmic segment spans residues 1-3; that stretch reads MEK. The helical transmembrane segment at 4–24 threads the bilayer; that stretch reads WSLMTITVLLALTVRWTVSLG. Residues 25–114 are Lumenal-facing; sequence SYSGAGKPPM…SQSHKLFMRT (90 aa). The N-linked (GlcNAc...) asparagine glycan is linked to asparagine 59. Residues 115-135 traverse the membrane as a helical segment; that stretch reads TVFVADLLIYIPAVILYCCSL. Over 136–143 the chain is Cytoplasmic; sequence KETSTKKK. A helical transmembrane segment spans residues 144-164; the sequence is VSSALCILLYPGLILIDHGHF. Residues 165-168 lie on the Lumenal side of the membrane; sequence QYNS. The chain crosses the membrane as a helical span at residues 169-189; sequence VSLGFALWGVLCLSYDWDLLG. The Cytoplasmic portion of the chain corresponds to 190–226; sequence SAAFCLALNYKQMELYHSLPFFCYLLGKCFKKGLKGK. The helical transmembrane segment at 227–247 threads the bilayer; that stretch reads GLLLLIKLAGTVVASFAVCWL. The Lumenal portion of the chain corresponds to 248–297; the sequence is PFCTDVEQIMQVLRRLFPIDRGLFEDKVANIWCSLSVLIKIKNVVSPQTQ. Residues 298–318 traverse the membrane as a helical segment; that stretch reads LKLSFAVTFLSLLPTCIKLTV. At 319–338 the chain is on the cytoplasmic side; it reads QPSLRGFKLTLVSCALSFFL. A helical membrane pass occupies residues 339–359; it reads FSFQVHEKSILLVSVPVCLII. Over 360–361 the chain is Lumenal; sequence NE. Residues 362–382 traverse the membrane as a helical segment; sequence VPFMATWFLLVSTFSMLPLLL. Residues 383–387 are Cytoplasmic-facing; sequence KDGLL. A helical transmembrane segment spans residues 388–408; it reads LPYAVTTLAFLSACVASFAIF. At 409-441 the chain is on the lumenal side; the sequence is EKTSAKDLQLKPFSQSLRGYVSWFKLFPKIVRS. A helical membrane pass occupies residues 442–462; it reads LFLLSVTLMGVLSVMSAAVHP. At 463 to 473 the chain is on the cytoplasmic side; sequence PQRFPDLFPVS. Residues 474 to 494 traverse the membrane as a helical segment; sequence VSSISCLHFLFFLVYFNVIIL. Residues 495-507 are Lumenal-facing; sequence WDSKNSRNQKKVS.

The protein belongs to the ALG6/ALG8 glucosyltransferase family.

It is found in the endoplasmic reticulum membrane. The catalysed reaction is an alpha-D-Man-(1-&gt;2)-alpha-D-Man-(1-&gt;2)-alpha-D-Man-(1-&gt;3)-[alpha-D-Man-(1-&gt;2)-alpha-D-Man-(1-&gt;3)-[alpha-D-Man-(1-&gt;2)-alpha-D-Man-(1-&gt;6)]-alpha-D-Man-(1-&gt;6)]-beta-D-Man-(1-&gt;4)-beta-D-GlcNAc-(1-&gt;4)-alpha-D-GlcNAc-diphospho-di-trans,poly-cis-dolichol + a di-trans,poly-cis-dolichyl beta-D-glucosyl phosphate = an alpha-D-Glc-(1-&gt;3)-alpha-D-Man-(1-&gt;2)-alpha-D-Man-(1-&gt;2)-alpha-D-Man-(1-&gt;3)-[alpha-D-Man-(1-&gt;2)-alpha-D-Man-(1-&gt;3)-[alpha-D-Man-(1-&gt;2)-alpha-D-Man-(1-&gt;6)]-alpha-D-Man-(1-&gt;6)]-beta-D-Man-(1-&gt;4)-beta-D-GlcNAc-(1-&gt;4)-alpha-D-GlcNAc-diphospho-di-trans,poly-cis-dolichol + a di-trans,poly-cis-dolichyl phosphate + H(+). It functions in the pathway protein modification; protein glycosylation. Dolichyl pyrophosphate Man9GlcNAc2 alpha-1,3-glucosyltransferase that operates in the biosynthetic pathway of dolichol-linked oligosaccharides, the glycan precursors employed in protein asparagine (N)-glycosylation. The assembly of dolichol-linked oligosaccharides begins on the cytosolic side of the endoplasmic reticulum membrane and finishes in its lumen. The sequential addition of sugars to dolichol pyrophosphate produces dolichol-linked oligosaccharides containing fourteen sugars, including two GlcNAcs, nine mannoses and three glucoses. Once assembled, the oligosaccharide is transferred from the lipid to nascent proteins by oligosaccharyltransferases. In the lumen of the endoplasmic reticulum, adds the first glucose residue from dolichyl phosphate glucose (Dol-P-Glc) onto the lipid-linked oligosaccharide intermediate Man(9)GlcNAc(2)-PP-Dol to produce Glc(1)Man(9)GlcNAc(2)-PP-Dol. Glc(1)Man(9)GlcNAc(2)-PP-Dol is a substrate for ALG8, the following enzyme in the biosynthetic pathway. The sequence is that of Dolichyl pyrophosphate Man9GlcNAc2 alpha-1,3-glucosyltransferase from Gallus gallus (Chicken).